We begin with the raw amino-acid sequence, 328 residues long: Ketol-acid reductoisomerase (NADP(+)) (328 aa).

Residues 1–179 (MRVLYERDGD…GGGAAGIIET (179 aa)) enclose the KARI N-terminal Rossmann domain. NADP(+) is bound by residues 24-27 (YGSQ), Arg-47, and Ser-51. The active site involves His-106. Gly-132 serves as a coordination point for NADP(+). The KARI C-terminal knotted domain occupies 180 to 325 (TFVDETETDL…ARLRSRMTCA (146 aa)). Residues Asp-188, Glu-192, Glu-224, and Glu-228 each contribute to the Mg(2+) site. Ser-249 serves as a coordination point for substrate.

It belongs to the ketol-acid reductoisomerase family. Requires Mg(2+) as cofactor.

It carries out the reaction (2R)-2,3-dihydroxy-3-methylbutanoate + NADP(+) = (2S)-2-acetolactate + NADPH + H(+). It catalyses the reaction (2R,3R)-2,3-dihydroxy-3-methylpentanoate + NADP(+) = (S)-2-ethyl-2-hydroxy-3-oxobutanoate + NADPH + H(+). It participates in amino-acid biosynthesis; L-isoleucine biosynthesis; L-isoleucine from 2-oxobutanoate: step 2/4. Its pathway is amino-acid biosynthesis; L-valine biosynthesis; L-valine from pyruvate: step 2/4. Involved in the biosynthesis of branched-chain amino acids (BCAA). Catalyzes an alkyl-migration followed by a ketol-acid reduction of (S)-2-acetolactate (S2AL) to yield (R)-2,3-dihydroxy-isovalerate. In the isomerase reaction, S2AL is rearranged via a Mg-dependent methyl migration to produce 3-hydroxy-3-methyl-2-ketobutyrate (HMKB). In the reductase reaction, this 2-ketoacid undergoes a metal-dependent reduction by NADPH to yield (R)-2,3-dihydroxy-isovalerate. The protein is Ketol-acid reductoisomerase (NADP(+)) of Tremblaya princeps.